Reading from the N-terminus, the 547-residue chain is Fumarate reductase (CoM/CoB) subunit A (547 aa).

It belongs to the FAD-dependent oxidoreductase 2 family. In terms of assembly, subunit A of the heterodimeric fumarate reductase of methanogenic Archaea, composed of subunits A (TfrA) and B (TfrB). It depends on an oxidized flavin as a cofactor.

Its subcellular location is the cytoplasm. It carries out the reaction coenzyme B + coenzyme M + fumarate = coenzyme M-coenzyme B heterodisulfide + succinate. In terms of biological role, catalyzes the reduction of fumarate with reduced coenzyme M (CoM-S-H) and coenzyme B (CoB-S-H). In vitro, is able to reduces fumarate with reduced benzyl viologen, oxidize CoM-S-H and CoB-S-H to CoM-S-S-CoB with methylene blue, and reduce CoM-S-S-CoB with reduced benzyl viologen. The enzyme has specificity for the two thiol compounds as the CoB--CoM heterodisulfide reductase. The enzyme is very sensitive to oxygen. This Methanothermobacter marburgensis (strain ATCC BAA-927 / DSM 2133 / JCM 14651 / NBRC 100331 / OCM 82 / Marburg) (Methanobacterium thermoautotrophicum) protein is Fumarate reductase (CoM/CoB) subunit A.